The sequence spans 168 residues: Transcriptional repressor NrdR (168 aa).

A zinc finger lies at 3–34 (CPYCGFAQDRVVDSRESKEADSIRRRRECERC). The ATP-cone domain occupies 49 to 139 (YMVVKKDGRR…VYRDFKDVNE (91 aa)).

The protein belongs to the NrdR family. It depends on Zn(2+) as a cofactor.

Its function is as follows. Negatively regulates transcription of bacterial ribonucleotide reductase nrd genes and operons by binding to NrdR-boxes. The protein is Transcriptional repressor NrdR of Acidobacterium capsulatum (strain ATCC 51196 / DSM 11244 / BCRC 80197 / JCM 7670 / NBRC 15755 / NCIMB 13165 / 161).